The following is a 97-amino-acid chain: Aspartyl/glutamyl-tRNA(Asn/Gln) amidotransferase subunit C (97 aa).

This sequence belongs to the GatC family. Heterotrimer of A, B and C subunits.

It carries out the reaction L-glutamyl-tRNA(Gln) + L-glutamine + ATP + H2O = L-glutaminyl-tRNA(Gln) + L-glutamate + ADP + phosphate + H(+). It catalyses the reaction L-aspartyl-tRNA(Asn) + L-glutamine + ATP + H2O = L-asparaginyl-tRNA(Asn) + L-glutamate + ADP + phosphate + 2 H(+). Its function is as follows. Allows the formation of correctly charged Asn-tRNA(Asn) or Gln-tRNA(Gln) through the transamidation of misacylated Asp-tRNA(Asn) or Glu-tRNA(Gln) in organisms which lack either or both of asparaginyl-tRNA or glutaminyl-tRNA synthetases. The reaction takes place in the presence of glutamine and ATP through an activated phospho-Asp-tRNA(Asn) or phospho-Glu-tRNA(Gln). The sequence is that of Aspartyl/glutamyl-tRNA(Asn/Gln) amidotransferase subunit C from Parasynechococcus marenigrum (strain WH8102).